The sequence spans 388 residues: Alanine racemase (388 aa).

Lysine 44 acts as the Proton acceptor; specific for D-alanine in catalysis. Lysine 44 is subject to N6-(pyridoxal phosphate)lysine. Residue arginine 142 coordinates substrate. The active-site Proton acceptor; specific for L-alanine is the tyrosine 273. Methionine 321 is a binding site for substrate.

The protein belongs to the alanine racemase family. Pyridoxal 5'-phosphate serves as cofactor.

It catalyses the reaction L-alanine = D-alanine. The protein operates within amino-acid biosynthesis; D-alanine biosynthesis; D-alanine from L-alanine: step 1/1. Catalyzes the interconversion of L-alanine and D-alanine. May also act on other amino acids. The sequence is that of Alanine racemase (alr) from Mycobacterium leprae (strain TN).